Here is a 393-residue protein sequence, read N- to C-terminus: Sister chromatid cohesion protein DCC1 (393 aa).

It belongs to the DCC1 family. As to quaternary structure, component of the CTF18-RFC complex which consists of CTF8, CTF18, DSCC1 and the RFC complex. Interacts with CTF8 and CTF18. Interacts with DDX11.

The protein localises to the nucleus. In terms of biological role, loads PCNA onto primed templates regulating velocity, spacing and restart activity of replication forks. May couple DNA replication to sister chromatid cohesion through regulation of the acetylation of the cohesin subunit SMC3. The protein is Sister chromatid cohesion protein DCC1 (DSCC1) of Homo sapiens (Human).